Reading from the N-terminus, the 198-residue chain is Linker for activation of T-cells family member 2 (198 aa).

At 1–4 (MAQP) the chain is on the extracellular side. A helical; Signal-anchor for type III membrane protein transmembrane segment spans residues 5–24 (ELLWAAAGLMLLGVAVSACV). S-palmitoyl cysteine attachment occurs at residues C23 and C26. The Cytoplasmic segment spans residues 25 to 198 (RCQLYATKRG…PTIDAVVLSK (174 aa)). Residues Y136, Y155, and Y184 each carry the phosphotyrosine modification.

When phosphorylated, interacts with GRB2. In terms of processing, phosphorylated on tyrosines following cross-linking of BCR; which induces the recruitment of GRB2.

It localises to the cell membrane. Involved in BCR (B-cell antigen receptor)-mediated signaling in B-cells. May also be involved in FCER1 (high affinity immunoglobulin epsilon receptor)-mediated signaling in mast cells and FCGR1 (high affinity immunoglobulin gamma Fc receptor I)-mediated signaling in myeloid cells. Couples activation of these receptors and their associated kinases with distal intracellular events such as calcium mobilization through the recruitment of GRB2. The protein is Linker for activation of T-cells family member 2 (LAT2) of Gallus gallus (Chicken).